The sequence spans 376 residues: Probable ribonucleoside-diphosphate reductase small subunit 048L (376 aa).

Aspartate 110, glutamate 140, and histidine 143 together coordinate Fe cation. The active site involves tyrosine 147. Residues glutamate 217, glutamate 251, and histidine 254 each coordinate Fe cation.

This sequence belongs to the ribonucleoside diphosphate reductase small chain family. In terms of assembly, heterotetramer composed of a homodimer of the large subunit (R1) and a homodimer of the small subunit (R2). Larger multisubunit protein complex are also active, composed of (R1)n(R2)n. Fe cation serves as cofactor.

The enzyme catalyses a 2'-deoxyribonucleoside 5'-diphosphate + [thioredoxin]-disulfide + H2O = a ribonucleoside 5'-diphosphate + [thioredoxin]-dithiol. Functionally, ribonucleoside-diphosphate reductase holoenzyme provides the precursors necessary for viral DNA synthesis. Allows virus growth in non-dividing cells. Catalyzes the biosynthesis of deoxyribonucleotides from the corresponding ribonucleotides. This is Probable ribonucleoside-diphosphate reductase small subunit 048L from Invertebrate iridescent virus 3 (IIV-3).